A 438-amino-acid polypeptide reads, in one-letter code: Probable exopolygalacturonase B (438 aa).

The signal sequence occupies residues 1–15 (MYLLPLTLFLTAAFG). 3 N-linked (GlcNAc...) asparagine glycosylation sites follow: N118, N185, and N225. One copy of the PbH1 1 repeat lies at 209–248 (TNDVSFDNVYIHAFSTNASSDPANTDGMDSLDVDGVSFTN). Catalysis depends on D255, which acts as the Proton donor. The cysteines at positions 257 and 274 are disulfide-linked. N263 and N275 each carry an N-linked (GlcNAc...) asparagine glycan. H278 is an active-site residue. PbH1 repeat units follow at residues 295-316 (IENV…RLKA) and 327-348 (INNV…VLDQ). N-linked (GlcNAc...) asparagine glycosylation is found at N302, N329, N354, and N366. A disulfide bridge links C392 with C398. A PbH1 4 repeat occupies 398–430 (CTNITLSNVNLTSPKGTAEIVCDDIQGGIGVDC). N-linked (GlcNAc...) asparagine glycosylation is found at N400 and N407.

It belongs to the glycosyl hydrolase 28 family.

It localises to the secreted. The enzyme catalyses [(1-&gt;4)-alpha-D-galacturonosyl](n) + H2O = alpha-D-galacturonate + [(1-&gt;4)-alpha-D-galacturonosyl](n-1). Functionally, specific in hydrolyzing the terminal glycosidic bond of polygalacturonic acid and oligogalacturonates. In Aspergillus niger (strain ATCC MYA-4892 / CBS 513.88 / FGSC A1513), this protein is Probable exopolygalacturonase B (pgxB).